The chain runs to 424 residues: Serine--tRNA ligase (424 aa).

Position 232-234 (232-234 (TAE)) interacts with L-serine. 263-265 (RSE) contributes to the ATP binding site. Glu-286 contributes to the L-serine binding site. 350-353 (EISS) contacts ATP. Ser-385 is a binding site for L-serine.

The protein belongs to the class-II aminoacyl-tRNA synthetase family. Type-1 seryl-tRNA synthetase subfamily. In terms of assembly, homodimer. The tRNA molecule binds across the dimer.

It localises to the cytoplasm. It carries out the reaction tRNA(Ser) + L-serine + ATP = L-seryl-tRNA(Ser) + AMP + diphosphate + H(+). The enzyme catalyses tRNA(Sec) + L-serine + ATP = L-seryl-tRNA(Sec) + AMP + diphosphate + H(+). The protein operates within aminoacyl-tRNA biosynthesis; selenocysteinyl-tRNA(Sec) biosynthesis; L-seryl-tRNA(Sec) from L-serine and tRNA(Sec): step 1/1. Its function is as follows. Catalyzes the attachment of serine to tRNA(Ser). Is also able to aminoacylate tRNA(Sec) with serine, to form the misacylated tRNA L-seryl-tRNA(Sec), which will be further converted into selenocysteinyl-tRNA(Sec). In Latilactobacillus sakei subsp. sakei (strain 23K) (Lactobacillus sakei subsp. sakei), this protein is Serine--tRNA ligase.